The primary structure comprises 215 residues: T-complex protein 10A homolog 1 (215 aa).

Positions 1 to 25 are disordered; the sequence is MLAGQLEARDPKEGTHPEDPCPGAG. Residues 7 to 19 show a composition bias toward basic and acidic residues; the sequence is EARDPKEGTHPED. Positions 69–110 form a coiled coil; that stretch reads ADVHGKLRSHIDALREQNMELREKLRALQLQRWKARKKSAAS. The tract at residues 75–96 is leucine-zipper; sequence LRSHIDALREQNMELREKLRAL. Residues 150–163 are compositionally biased toward polar residues; it reads ATLLGQRSSSNNSA. The interval 150-215 is disordered; the sequence is ATLLGQRSSS…TPCAERRGGV (66 aa).

This sequence belongs to the TCP10 family. As to quaternary structure, self-associates (via leucine zipper). Interacts (via leucine zipper) with ZIPK/DAPK3 (via leucine zipper). Interacts with MAD4. Expressed in liver and testis. Expressed in the seminiferous tubules (at protein level).

The protein resides in the nucleus. Functionally, may be involved in transcriptional regulation. Has in vitro transcription inhibition activity. Acts as a tumor suppressor in hepatocellular carcinoma (HCC) cells. This chain is T-complex protein 10A homolog 1 (TCP10L), found in Homo sapiens (Human).